A 515-amino-acid polypeptide reads, in one-letter code: Probable cytosol aminopeptidase (515 aa).

Mn(2+) contacts are provided by Lys-279 and Asp-284. Residue Lys-291 is part of the active site. Mn(2+) is bound by residues Asp-302, Asp-361, and Glu-363. Residue Arg-365 is part of the active site.

This sequence belongs to the peptidase M17 family. Requires Mn(2+) as cofactor.

The protein localises to the cytoplasm. It carries out the reaction Release of an N-terminal amino acid, Xaa-|-Yaa-, in which Xaa is preferably Leu, but may be other amino acids including Pro although not Arg or Lys, and Yaa may be Pro. Amino acid amides and methyl esters are also readily hydrolyzed, but rates on arylamides are exceedingly low.. It catalyses the reaction Release of an N-terminal amino acid, preferentially leucine, but not glutamic or aspartic acids.. Presumably involved in the processing and regular turnover of intracellular proteins. Catalyzes the removal of unsubstituted N-terminal amino acids from various peptides. In Mycobacterium tuberculosis (strain ATCC 25177 / H37Ra), this protein is Probable cytosol aminopeptidase.